A 600-amino-acid polypeptide reads, in one-letter code: Probable translation initiation factor IF-2 (600 aa).

Residues 13 to 228 form the tr-type G domain; sequence LRTPIVAVLG…VLMGLAQRYM (216 aa). The tract at residues 22 to 29 is G1; it reads GHVDHGKT. 22–29 lines the GTP pocket; sequence GHVDHGKT. The interval 47 to 51 is G2; sequence AITQH. The interval 84–87 is G3; it reads DTPG. Residues 84 to 88 and 138 to 141 contribute to the GTP site; these read DTPGH and NKID. The segment at 138-141 is G4; sequence NKID. A disordered region spans residues 140 to 162; it reads IDTTPGWNPNPDAPVQGTYDDQS. Residues 206-208 are G5; it reads SAE.

It belongs to the TRAFAC class translation factor GTPase superfamily. Classic translation factor GTPase family. IF-2 subfamily.

Function in general translation initiation by promoting the binding of the formylmethionine-tRNA to ribosomes. Seems to function along with eIF-2. The polypeptide is Probable translation initiation factor IF-2 (Halobacterium salinarum (strain ATCC 700922 / JCM 11081 / NRC-1) (Halobacterium halobium)).